Here is a 117-residue protein sequence, read N- to C-terminus: UPF0342 protein BcerKBAB4_0767 (117 aa).

Belongs to the UPF0342 family.

This Bacillus mycoides (strain KBAB4) (Bacillus weihenstephanensis) protein is UPF0342 protein BcerKBAB4_0767.